Consider the following 117-residue polypeptide: Histone-like protein Hq1 (117 aa).

2 stretches are compositionally biased toward basic residues: residues 1–17 (MPAK…RSKA) and 39–50 (RKLRAAQKKLAK). Residues 1 to 117 (MPAKKRKTTR…RGRGRPRKKA (117 aa)) are disordered. Basic and acidic residues predominate over residues 51–68 (AKKDASRKLAKLRKEAAR). Positions 71-117 (AAAKKTRAPSKKGRKKATRKKGGGRSRKTARKVSTMKRGRGRPRKKA) are enriched in basic residues.

In terms of biological role, binds DNA in vitro. The polypeptide is Histone-like protein Hq1 (hcbA) (Coxiella burnetii (strain RSA 493 / Nine Mile phase I)).